A 304-amino-acid chain; its full sequence is MLQKPRNRGRSGGQAERDRDWSHSGNPGASRAGEDARVLRDGFAEEAPSTSRGPGGSQGSQGPSPQGARRAQAAPAVGPRSQKQLELKVSELVQFLLIKDQKKIPIKRADILKHVIGDYKDIFPDLFKRAAERLQYVFGYKLVELEPKSNTYILINTLEPVEEDAEMRGDQGTPTTGLLMIVLGLIFMKGNTIKETEAWDFLRRLGVYPTKKHLIFGDPKKLITEDFVRQRYLEYRRIPHTDPVDYEFQWGPRTNLETSKMKVLKFVAKVHNQDPKDWPAQYCEALADEENRARPQPSGPAPSS.

2 disordered regions span residues 1-82 (MLQK…PRSQ) and 285-304 (ALAD…APSS). Residues 32–43 (AGEDARVLRDGF) show a composition bias toward basic and acidic residues. Phosphoserine is present on residues serine 57, serine 60, and serine 64. Residues 60-80 (SQGPSPQGARRAQAAPAVGPR) show a composition bias toward low complexity. An interaction with NSMCE1 region spans residues 78–304 (GPRSQKQLEL…PQPSGPAPSS (227 aa)). Residues 85 to 285 (LELKVSELVQ…KDWPAQYCEA (201 aa)) enclose the MAGE domain.

In terms of assembly, component of the SMC5-SMC6 complex which consists at least of SMC5, SMC6, NSMCE2, NSMCE1, NSMCE4A or EID3 and NSMCE3. NSMCE1, NSMCE4A or EID3 and NSMCE3 probably form a subcomplex that bridges the head domains of the SMC5:SMC6 heterodimer. Interacts with PJA1. Interacts with E2F1 (via C-terminus). Interacts with NGFR (via C-terminus). Interacts with NSMCE1. Interacts with NSMCE4. Interacts with SMC6. Interacts with EID3. Ubiquitous.

The protein resides in the cytoplasm. It localises to the nucleus. The protein localises to the chromosome. It is found in the telomere. Functionally, component of the SMC5-SMC6 complex, a complex involved in repair of DNA double-strand breaks by homologous recombination. The complex may promote sister chromatid homologous recombination by recruiting the SMC1-SMC3 cohesin complex to double-strand breaks. The complex is required for telomere maintenance via recombination in ALT (alternative lengthening of telomeres) cell lines and mediates sumoylation of shelterin complex (telosome) components which is proposed to lead to shelterin complex disassembly in ALT-associated PML bodies (APBs). In vitro enhances ubiquitin ligase activity of NSMCE1. Proposed to act through recruitment and/or stabilization of the Ubl-conjugating enzyme (E2) at the E3:substrate complex. May be a growth suppressor that facilitates the entry of the cell into cell cycle arrest. The protein is Non-structural maintenance of chromosomes element 3 homolog of Homo sapiens (Human).